The chain runs to 202 residues: Casparian strip membrane protein 1 (202 aa).

The span at 1–13 shows a compositional bias: polar residues; it reads MEKSESSTIQIAE. Residues 1 to 30 are disordered; that stretch reads MEKSESSTIQIAESSKDRKGKAPLLPPPVH. The Cytoplasmic portion of the chain corresponds to 1–42; it reads MEKSESSTIQIAESSKDRKGKAPLLPPPVHHERAAGYKRGVA. Residues 43-63 traverse the membrane as a helical segment; it reads IFDLILRISAATAALAATIVM. The Extracellular portion of the chain corresponds to 64 to 90; it reads GTTEQTLPFFTQFFQFRASYDDLPTFT. The helical transmembrane segment at 91–111 threads the bilayer; sequence FFVIAMAIVTGYLILSVPFSI. Residues 112–130 are Cytoplasmic-facing; it reads VCIARPVVAAPRILLILCD. The helical transmembrane segment at 131-151 threads the bilayer; sequence TLTVTLATSAAGASAAIVYLA. Residues 152 to 177 lie on the Extracellular side of the membrane; that stretch reads HNGXSDANWLAICQQFNDFCQRVSGA. The chain crosses the membrane as a helical span at residues 178–198; sequence VVAAFVSAVLLIFLVVLSAIV. Topologically, residues 199–202 are cytoplasmic; sequence LKKH.

Belongs to the Casparian strip membrane proteins (CASP) family. As to quaternary structure, homodimer and heterodimers.

The protein localises to the cell membrane. Functionally, regulates membrane-cell wall junctions and localized cell wall deposition. Required for establishment of the Casparian strip membrane domain (CSD) and the subsequent formation of Casparian strips, a cell wall modification of the root endodermis that determines an apoplastic barrier between the intraorganismal apoplasm and the extraorganismal apoplasm and prevents lateral diffusion. The polypeptide is Casparian strip membrane protein 1 (Triphysaria pusilla (Dwarf owl's-clover)).